Reading from the N-terminus, the 284-residue chain is MYVVSTKQMLNNAQRGGYAVPAFNIHNLETMQVVVETAANLHAPVIIAGTPGTFTYAGTENLLALVSAMAKQYHHPLAIHLDHHTKFDDIAQKVRSGVRSVMIDASHLPFAQNISRVKEVVDFCHRFDVSVEAELGQLGGQEDDVQVNEADVFYTNPAQAREFAEATGIDSLAVAIGTAHGMYASAPALDFSRLENIRQWVNLPLVLHGASGLSTKDIQQTIKLGICKINVATELKNAFSQALKNYLTEHPEATDPRDYLQSAKSAMRDVVSKVIADCGCEGRA.

D82 acts as the Proton donor in catalysis. Residues H83 and H180 each coordinate Zn(2+). G181 contacts dihydroxyacetone phosphate. H208 contacts Zn(2+). Residues 209–211 and 230–233 each bind dihydroxyacetone phosphate; these read GAS and NVAT.

The protein belongs to the class II fructose-bisphosphate aldolase family. TagBP aldolase GatY subfamily. In terms of assembly, forms a complex with GatZ. Zn(2+) serves as cofactor.

The catalysed reaction is D-tagatofuranose 1,6-bisphosphate = D-glyceraldehyde 3-phosphate + dihydroxyacetone phosphate. Its pathway is carbohydrate metabolism; D-tagatose 6-phosphate degradation; D-glyceraldehyde 3-phosphate and glycerone phosphate from D-tagatose 6-phosphate: step 2/2. Functionally, catalytic subunit of the tagatose-1,6-bisphosphate aldolase GatYZ, which catalyzes the reversible aldol condensation of dihydroxyacetone phosphate (DHAP or glycerone-phosphate) with glyceraldehyde 3-phosphate (G3P) to produce tagatose 1,6-bisphosphate (TBP). Requires GatZ subunit for full activity and stability. Is involved in the catabolism of galactitol. This Shigella sonnei (strain Ss046) protein is D-tagatose-1,6-bisphosphate aldolase subunit GatY.